A 62-amino-acid chain; its full sequence is Ferredoxin-1 (62 aa).

4Fe-4S ferredoxin-type domains lie at 3–32 (WTVT…LQDG) and 33–62 (KAVP…VEEN). [3Fe-4S] cluster is bound by residues cysteine 12 and cysteine 18. The [4Fe-4S] cluster site is built by cysteine 22, cysteine 42, cysteine 45, and cysteine 48. [3Fe-4S] cluster is bound at residue cysteine 52.

As to quaternary structure, homodimer. Requires [3Fe-4S] cluster as cofactor. It depends on [4Fe-4S] cluster as a cofactor.

Functionally, ferredoxins are iron-sulfur proteins that transfer electrons in a wide variety of metabolic reactions. This ferredoxin serves as a carrier for pyruvate dehydrogenase. The sequence is that of Ferredoxin-1 from Nitratidesulfovibrio vulgaris (strain DSM 19637 / Miyazaki F) (Desulfovibrio vulgaris).